Consider the following 289-residue polypeptide: tRNA (adenine(58)-N(1))-methyltransferase catalytic subunit TRMT61A (289 aa).

An N-acetylserine modification is found at Ser-2. Substrate contacts are provided by residues 20–22, 35–42, 64–65, 85–89, and 110–117; these read LGH, QTQTRHGV, GW, QILYS, and SGTGSGSV. Residues Leu-87, 114–116, Glu-135, Arg-140, 163–164, and Asp-181 contribute to the S-adenosyl-L-methionine site; these read SGS and DV. Residues 180–183 and 205–212 each bind substrate; these read LDIP and SFSPCIEQ. Positions 245-272 are disordered; it reads LPPPDLGTGTDGPAGSDTSPFRSGTPMK. Over residues 250 to 259 the composition is skewed to low complexity; that stretch reads LGTGTDGPAG. A Phosphoserine modification is found at Ser-263. Thr-278 serves as a coordination point for substrate.

Belongs to the class I-like SAM-binding methyltransferase superfamily. TRM61 family. Heterotetramer; composed of two copies of TRMT6 and two copies of TRMT61A.

The protein localises to the nucleus. The catalysed reaction is adenosine(58) in tRNA + S-adenosyl-L-methionine = N(1)-methyladenosine(58) in tRNA + S-adenosyl-L-homocysteine + H(+). It catalyses the reaction an adenosine in mRNA + S-adenosyl-L-methionine = an N(1)-methyladenosine in mRNA + S-adenosyl-L-homocysteine + H(+). Its function is as follows. Catalytic subunit of tRNA (adenine-N(1)-)-methyltransferase, which catalyzes the formation of N(1)-methyladenine at position 58 (m1A58) in initiator methionyl-tRNA. Catalytic subunit of mRNA N(1)-methyltransferase complex, which mediates methylation of adenosine residues at the N(1) position of a small subset of mRNAs: N(1) methylation takes place in tRNA T-loop-like structures of mRNAs and is only present at low stoichiometries. This is tRNA (adenine(58)-N(1))-methyltransferase catalytic subunit TRMT61A (TRMT61A) from Homo sapiens (Human).